Reading from the N-terminus, the 207-residue chain is LexA repressor (207 aa).

The H-T-H motif DNA-binding region spans 33–52; sequence VKEMSETFGISHASVHDRIN. Catalysis depends on for autocatalytic cleavage activity residues Ser129 and Lys166.

The protein belongs to the peptidase S24 family. As to quaternary structure, homodimer.

The catalysed reaction is Hydrolysis of Ala-|-Gly bond in repressor LexA.. Functionally, represses a number of genes involved in the response to DNA damage (SOS response), including recA and lexA. In the presence of single-stranded DNA, RecA interacts with LexA causing an autocatalytic cleavage which disrupts the DNA-binding part of LexA, leading to derepression of the SOS regulon and eventually DNA repair. This is LexA repressor from Oleidesulfovibrio alaskensis (strain ATCC BAA-1058 / DSM 17464 / G20) (Desulfovibrio alaskensis).